We begin with the raw amino-acid sequence, 201 residues long: Twin horsetail protein 2 (201 aa).

The protein resides in the nucleus. Functionally, required for correct meiotic chromosome segregation and recombination. The protein is Twin horsetail protein 2 (tht2) of Schizosaccharomyces pombe (strain 972 / ATCC 24843) (Fission yeast).